A 322-amino-acid polypeptide reads, in one-letter code: MKKKNVVVFGGGTGLSVLLRGLKTFPVSITAIVTVADDGGSSGRLRKELDIPPPGDVRNVLVALSEVEPLLEQLFQHRFENGNGLSGHSLGNLLLAGMTSITGDFARGISEMSKVLNVRGKVLPASNRSIILHGEMEDGTIVTGESSIPKAGKKIKRVFLTPKDTKPLREGLEAIRKADVIVIGPGSLYTSVLPNLLVPGICEAIKQSTARKVYICNVMTQNGETDGYTASDHLQAIMDHCGVGIVDDILVHGEPISDTVKAKYAKEKAEPVIVDEHKLKALGVGTISDYFVLEQDDVLRHNASKVSEAILEGKPRTSSSIQ.

NAD(+) contacts are provided by residues threonine 13, asparagine 217–methionine 219, lysine 263–glutamate 267, and arginine 300–histidine 301.

This sequence belongs to the gluconeogenesis factor family.

Its subcellular location is the cytoplasm. Functionally, required for morphogenesis under gluconeogenic growth conditions. The sequence is that of Gluconeogenesis factor from Halalkalibacterium halodurans (strain ATCC BAA-125 / DSM 18197 / FERM 7344 / JCM 9153 / C-125) (Bacillus halodurans).